The sequence spans 134 residues: Large ribosomal subunit protein bL12 (134 aa).

It belongs to the bacterial ribosomal protein bL12 family. Homodimer. Part of the ribosomal stalk of the 50S ribosomal subunit. Forms a multimeric L10(L12)X complex, where L10 forms an elongated spine to which 2 to 4 L12 dimers bind in a sequential fashion. Binds GTP-bound translation factors.

Its function is as follows. Forms part of the ribosomal stalk which helps the ribosome interact with GTP-bound translation factors. Is thus essential for accurate translation. The polypeptide is Large ribosomal subunit protein bL12 (Anaplasma phagocytophilum (strain HZ)).